A 284-amino-acid polypeptide reads, in one-letter code: Bifunctional protein FolD (284 aa).

NADP(+) is bound by residues 166 to 168 (GAS), Ser-191, and Ile-232.

The protein belongs to the tetrahydrofolate dehydrogenase/cyclohydrolase family. Homodimer.

The enzyme catalyses (6R)-5,10-methylene-5,6,7,8-tetrahydrofolate + NADP(+) = (6R)-5,10-methenyltetrahydrofolate + NADPH. It catalyses the reaction (6R)-5,10-methenyltetrahydrofolate + H2O = (6R)-10-formyltetrahydrofolate + H(+). Its pathway is one-carbon metabolism; tetrahydrofolate interconversion. Its function is as follows. Catalyzes the oxidation of 5,10-methylenetetrahydrofolate to 5,10-methenyltetrahydrofolate and then the hydrolysis of 5,10-methenyltetrahydrofolate to 10-formyltetrahydrofolate. This Thiobacillus denitrificans (strain ATCC 25259 / T1) protein is Bifunctional protein FolD.